An 86-amino-acid polypeptide reads, in one-letter code: Photosystem I reaction center subunit PsaK (86 aa).

2 helical membrane-spanning segments follow: residues 14–34 and 57–77; these read LQWSPTVGLIIIIANIIAIAF and FGLPALLATTAFGHILGVGAV.

The protein belongs to the PsaG/PsaK family.

The protein localises to the cellular thylakoid membrane. The protein is Photosystem I reaction center subunit PsaK of Nostoc punctiforme (strain ATCC 29133 / PCC 73102).